The primary structure comprises 213 residues: MEETKSRFRRICVFCGSSSGNKTTYHDAALQLAHQLVERNIDLVYGGGSVGLMGLISQAVHDGGRHVLGIIPKSLAPREITGESIGEVITVSTMHQRKAEMGRQADAFIALPGGYGTFEELLEVITWSQLGIHTKPVGLLNVDGFYDSLLTFIDKAVDEGFVSSTARRIIVSAPNAPQLLQLLEEYVPKHDDFVSKMVWDNTTDAFTLEGDSF.

Residues Glu79, 97-98 (RK), 114-120 (GYGTFEE), and Thr126 contribute to the substrate site.

Belongs to the LOG family. In terms of tissue distribution, expressed in roots and shoots. Detected in root hairs.

It is found in the cytoplasm. The protein localises to the nucleus. It carries out the reaction N(6)-(dimethylallyl)adenosine 5'-phosphate + H2O = N(6)-dimethylallyladenine + D-ribose 5-phosphate. It catalyses the reaction 9-ribosyl-trans-zeatin 5'-phosphate + H2O = trans-zeatin + D-ribose 5-phosphate. Its function is as follows. Cytokinin-activating enzyme working in the direct activation pathway. Phosphoribohydrolase that converts inactive cytokinin nucleotides to the biologically active free-base forms. This chain is Cytokinin riboside 5'-monophosphate phosphoribohydrolase LOG2 (LOG2), found in Arabidopsis thaliana (Mouse-ear cress).